The following is a 212-amino-acid chain: Pyridoxine/pyridoxamine 5'-phosphate oxidase (212 aa).

Substrate is bound by residues 8–11 (RREY) and Lys-66. FMN-binding positions include 61–66 (RIVLLK), 76–77 (FT), Arg-82, Lys-83, and Gln-105. Substrate is bound by residues Tyr-123, Arg-127, and Ser-131. Residues 140 to 141 (QS) and Trp-185 each bind FMN. 191–193 (RLH) is a substrate binding site. Position 195 (Arg-195) interacts with FMN.

It belongs to the pyridoxamine 5'-phosphate oxidase family. As to quaternary structure, homodimer. It depends on FMN as a cofactor.

It catalyses the reaction pyridoxamine 5'-phosphate + O2 + H2O = pyridoxal 5'-phosphate + H2O2 + NH4(+). The enzyme catalyses pyridoxine 5'-phosphate + O2 = pyridoxal 5'-phosphate + H2O2. It functions in the pathway cofactor metabolism; pyridoxal 5'-phosphate salvage; pyridoxal 5'-phosphate from pyridoxamine 5'-phosphate: step 1/1. The protein operates within cofactor metabolism; pyridoxal 5'-phosphate salvage; pyridoxal 5'-phosphate from pyridoxine 5'-phosphate: step 1/1. Functionally, catalyzes the oxidation of either pyridoxine 5'-phosphate (PNP) or pyridoxamine 5'-phosphate (PMP) into pyridoxal 5'-phosphate (PLP). This is Pyridoxine/pyridoxamine 5'-phosphate oxidase from Shewanella frigidimarina (strain NCIMB 400).